The primary structure comprises 53 residues: UPF0391 membrane protein TM1040_2720 (53 aa).

2 helical membrane-spanning segments follow: residues 4-24 and 29-48; these read WALA…GGIA and GIAQ…ALIL.

It belongs to the UPF0391 family.

The protein localises to the cell membrane. In Ruegeria sp. (strain TM1040) (Silicibacter sp.), this protein is UPF0391 membrane protein TM1040_2720.